An 832-amino-acid chain; its full sequence is Protein P (832 aa).

A terminal protein domain (TP) region spans residues 1 to 177 (MPLSYQHFRK…FCGSPYSWEQ (177 aa)). A spacer region spans residues 178 to 335 (ELQHGAESFN…HCLSHLVNLL (158 aa)). 2 stretches are compositionally biased toward polar residues: residues 205–220 (SKHQ…QQGQ) and 251–263 (SGHN…ESAS). The segment at 205–263 (SKHQQSRLGLQPQQGQLAKGQRGRSGSVRSRAHSATRRSVGVEPSGSGHNNNSASESAS) is disordered. Positions 336 to 679 (EDWGPCTEHG…YATLYPVARQ (344 aa)) are polymerase/reverse transcriptase domain (RT). Residues 346–589 (KHHIRIPRTP…YSLNFMGYVI (244 aa)) enclose the Reverse transcriptase domain. Residues Asp-418, Asp-540, and Asp-541 each contribute to the Mg(2+) site.

This sequence belongs to the hepadnaviridae P protein family.

The catalysed reaction is DNA(n) + a 2'-deoxyribonucleoside 5'-triphosphate = DNA(n+1) + diphosphate. It carries out the reaction Endonucleolytic cleavage to 5'-phosphomonoester.. Its activity is regulated as follows. Activated by host HSP70 and HSP40 in vitro to be able to bind the epsilon loop of the pgRNA. Because deletion of the RNase H region renders the protein partly chaperone-independent, the chaperones may be needed indirectly to relieve occlusion of the RNA-binding site by this domain. Inhibited by several reverse-transcriptase inhibitors: Lamivudine, Adefovir and Entecavir. Multifunctional enzyme that converts the viral RNA genome into dsDNA in viral cytoplasmic capsids. This enzyme displays a DNA polymerase activity that can copy either DNA or RNA templates, and a ribonuclease H (RNase H) activity that cleaves the RNA strand of RNA-DNA heteroduplexes in a partially processive 3'- to 5'-endonucleasic mode. Neo-synthesized pregenomic RNA (pgRNA) are encapsidated together with the P protein, and reverse-transcribed inside the nucleocapsid. Initiation of reverse-transcription occurs first by binding the epsilon loop on the pgRNA genome, and is initiated by protein priming, thereby the 5'-end of (-)DNA is covalently linked to P protein. Partial (+)DNA is synthesized from the (-)DNA template and generates the relaxed circular DNA (RC-DNA) genome. After budding and infection, the RC-DNA migrates in the nucleus, and is converted into a plasmid-like covalently closed circular DNA (cccDNA). The activity of P protein does not seem to be necessary for cccDNA generation, and is presumably released from (+)DNA by host nuclear DNA repair machinery. The sequence is that of Protein P from Gorilla gorilla (western gorilla).